The following is a 253-amino-acid chain: Methionine-R-sulfoxide reductase B3, mitochondrial (253 aa).

Positions 1–56 (MPPAAPSVARSREGGGIGQRRLVFPKSARRTLPCPIALCLGLCLAAAAATTTRASA) are cleaved as a signal peptide. K102 carries the post-translational modification N6-acetyllysine. The MsrB domain maps to 107-229 (QQELRKRLTP…NSASLSFTPA (123 aa)). The Zn(2+) site is built by C146, C149, C195, and C198. C218 serves as the catalytic Nucleophile. The interval 227-253 (TPADSSEAEGSGIKESGSPAAADRAEL) is disordered. Residue S244 is modified to Phosphoserine. The Endoplasmic reticulum retention signal signature appears at 250 to 253 (RAEL).

This sequence belongs to the MsrB Met sulfoxide reductase family. As to quaternary structure, monomer. Zn(2+) serves as cofactor. In terms of tissue distribution, widely expressed. Detected in the sensory epithelia of the organ of Corti and vestibular end organs as early as P2 up to adulthood (at protein level). In the organ of Corti, present in inner and outer hair cells and, to a lesser extent, in supporting cells (at protein level). In hair cells, distributed throughout the cell body. Barely detectable level in stereocilia. Also observed in spiral ganglion neurons, but not in the stria vascularis. In the vestibular end organs, found throughout the sensory epithelium, but more intense expression in hair cells than in supporting cells (at protein level). In vestibular hair cells, present within cell bodies and to a lesser extent in kinocilia. Barely detectable in stereocilia.

The protein localises to the endoplasmic reticulum. The catalysed reaction is L-methionyl-[protein] + [thioredoxin]-disulfide + H2O = L-methionyl-(R)-S-oxide-[protein] + [thioredoxin]-dithiol. The enzyme catalyses [thioredoxin]-disulfide + L-methionine + H2O = L-methionine (R)-S-oxide + [thioredoxin]-dithiol. Catalyzes the reduction of free and protein-bound methionine sulfoxide to methionine. The protein is Methionine-R-sulfoxide reductase B3, mitochondrial (Msrb3) of Mus musculus (Mouse).